The primary structure comprises 349 residues: Thioredoxin-related transmembrane protein 4 (349 aa).

The signal sequence occupies residues 1–23 (MAGGRCGPQLTALLAAWIAAVAA). One can recognise a Thioredoxin domain in the interval 30 to 137 (AALPPEQSRV…FEDLQNYILE (108 aa)). Residues Cys64 and Cys67 each act as nucleophile in the active site. Residues Cys64 and Cys67 are joined by a disulfide bond. The chain crosses the membrane as a helical span at residues 190–210 (VFFVIATLVFGLFMGLVLVVI). A compositionally biased stretch (basic and acidic residues) spans 225–240 (RSEQNRRSEEAHRAEQ). The interval 225-349 (RSEQNRRSEE…RKSQHADKGL (125 aa)) is disordered. 2 stretches are compositionally biased toward acidic residues: residues 242–284 (QDAE…EEDN) and 312–321 (VEPEEAEEGI). A phosphoserine mark is found at Ser251 and Ser259. A compositionally biased stretch (basic and acidic residues) spans 335–349 (DSLRQRKSQHADKGL).

Its subcellular location is the nucleus inner membrane. The protein localises to the endoplasmic reticulum membrane. The chain is Thioredoxin-related transmembrane protein 4 (TMX4) from Homo sapiens (Human).